The following is a 131-amino-acid chain: Small ribosomal subunit protein uS8 (131 aa).

It belongs to the universal ribosomal protein uS8 family. In terms of assembly, part of the 30S ribosomal subunit. Contacts proteins S5 and S12.

In terms of biological role, one of the primary rRNA binding proteins, it binds directly to 16S rRNA central domain where it helps coordinate assembly of the platform of the 30S subunit. In Burkholderia mallei (strain NCTC 10247), this protein is Small ribosomal subunit protein uS8.